We begin with the raw amino-acid sequence, 94 residues long: UPF0381 protein YfcZ (94 aa).

This sequence belongs to the UPF0381 family.

This chain is UPF0381 protein YfcZ (yfcZ), found in Escherichia coli O6:H1 (strain CFT073 / ATCC 700928 / UPEC).